Here is a 101-residue protein sequence, read N- to C-terminus: Apolipoprotein C-II (101 aa).

Residues M1–G22 form the signal peptide. Positions T66–I74 are lipid binding. The interval S78–Q101 is lipoprotein lipase cofactor.

This sequence belongs to the apolipoprotein C2 family. In terms of processing, proapolipoprotein C-II is synthesized as a sialic acid containing glycoprotein which is subsequently desialylated prior to its proteolytic processing. Post-translationally, proapolipoprotein C-II, the major form found in plasma undergoes proteolytic cleavage of its N-terminal hexapeptide to generate apolipoprotein C-II, which occurs as the minor form in plasma.

The protein localises to the secreted. Its function is as follows. Component of chylomicrons, very low-density lipoproteins (VLDL), low-density lipoproteins (LDL), and high-density lipoproteins (HDL) in plasma. Plays an important role in lipoprotein metabolism as an activator of lipoprotein lipase. Both proapolipoprotein C-II and apolipoprotein C-II can activate lipoprotein lipase. This Leptonychotes weddellii (Weddell seal) protein is Apolipoprotein C-II (APOC2).